We begin with the raw amino-acid sequence, 709 residues long: Elongation factor G (709 aa).

Residues 9-295 enclose the tr-type G domain; it reads AKVRNIGIMA…AVVRYLPTPL (287 aa). GTP is bound by residues 18–25, 86–90, and 140–143; these read AHIDAGKT, DTPGH, and NKLD.

It belongs to the TRAFAC class translation factor GTPase superfamily. Classic translation factor GTPase family. EF-G/EF-2 subfamily.

It localises to the cytoplasm. In terms of biological role, catalyzes the GTP-dependent ribosomal translocation step during translation elongation. During this step, the ribosome changes from the pre-translocational (PRE) to the post-translocational (POST) state as the newly formed A-site-bound peptidyl-tRNA and P-site-bound deacylated tRNA move to the P and E sites, respectively. Catalyzes the coordinated movement of the two tRNA molecules, the mRNA and conformational changes in the ribosome. In Streptomyces avermitilis (strain ATCC 31267 / DSM 46492 / JCM 5070 / NBRC 14893 / NCIMB 12804 / NRRL 8165 / MA-4680), this protein is Elongation factor G.